Consider the following 334-residue polypeptide: N-acetyl-gamma-glutamyl-phosphate reductase (334 aa).

The active site involves Cys154.

This sequence belongs to the NAGSA dehydrogenase family. Type 1 subfamily.

It localises to the cytoplasm. The catalysed reaction is N-acetyl-L-glutamate 5-semialdehyde + phosphate + NADP(+) = N-acetyl-L-glutamyl 5-phosphate + NADPH + H(+). It participates in amino-acid biosynthesis; L-arginine biosynthesis; N(2)-acetyl-L-ornithine from L-glutamate: step 3/4. Its function is as follows. Catalyzes the NADPH-dependent reduction of N-acetyl-5-glutamyl phosphate to yield N-acetyl-L-glutamate 5-semialdehyde. This is N-acetyl-gamma-glutamyl-phosphate reductase from Aliivibrio fischeri (strain ATCC 700601 / ES114) (Vibrio fischeri).